The following is a 661-amino-acid chain: Transketolase (661 aa).

Residue Ser-2 is modified to N-acetylserine. Position 31 (His-31) interacts with substrate. Residues His-71 and 119 to 121 (GPL) each bind thiamine diphosphate. Residue Asp-160 coordinates Mg(2+). Thiamine diphosphate contacts are provided by Gly-161 and Asn-190. Residues Asn-190 and Val-192 each contribute to the Mg(2+) site. Substrate-binding residues include His-267, Arg-359, and Ser-386. His-267 contributes to the thiamine diphosphate binding site. Glu-413 functions as the Proton donor in the catalytic mechanism. Phe-439 is a binding site for thiamine diphosphate. 3 residues coordinate substrate: His-463, Asp-471, and Arg-522.

Belongs to the transketolase family. In terms of assembly, homodimer. Mg(2+) is required as a cofactor. The cofactor is Ca(2+). It depends on Mn(2+) as a cofactor. Co(2+) serves as cofactor. Requires thiamine diphosphate as cofactor.

It catalyses the reaction D-sedoheptulose 7-phosphate + D-glyceraldehyde 3-phosphate = aldehydo-D-ribose 5-phosphate + D-xylulose 5-phosphate. Its function is as follows. Catalyzes the transfer of a two-carbon ketol group from a ketose donor to an aldose acceptor, via a covalent intermediate with the cofactor thiamine pyrophosphate. The polypeptide is Transketolase (tkt-1) (Dictyostelium discoideum (Social amoeba)).